Reading from the N-terminus, the 119-residue chain is Membrane-anchored ubiquitin-fold protein 1 (119 aa).

Residues 9–75 form the Ubiquitin-like domain; that stretch reads FEIKFRLPDG…LENNKTLSEC (67 aa). At Cys-116 the chain carries Cysteine methyl ester. Residue Cys-116 is the site of S-farnesyl cysteine attachment. The propeptide at 117–119 is removed in mature form; sequence SIM.

The protein localises to the cell membrane. In terms of biological role, may serve as docking site to facilitate the association of other proteins to the plasma membrane. The sequence is that of Membrane-anchored ubiquitin-fold protein 1 (MUB1) from Oryza sativa subsp. japonica (Rice).